The sequence spans 727 residues: Rho-related BTB domain-containing protein 2 (727 aa).

The tract at residues 1–210 is rho-like; that stretch reads MDSDMDYERP…DNAIRAALIS (210 aa). GTP is bound by residues 21-28, 84-88, and 140-143; these read GDNAVGKT, DTFGD, and CQLD. BTB domains are found at residues 266–442 and 500–567; these read ADVI…DENE and SDVT…TSSP. The segment at 304 to 333 is disordered; sequence ELGGPSEPGGTHPEDHQGHSDQHHHHHHHH. Basic and acidic residues predominate over residues 315-324; the sequence is HPEDHQGHSD. Positions 703–727 are disordered; that stretch reads FWNSPSSPSSSAASSSSPSSSSAVV. The span at 706–727 shows a compositional bias: low complexity; sequence SPSSPSSSAASSSSPSSSSAVV.

This sequence belongs to the small GTPase superfamily. Rho family. As to quaternary structure, interacts with HSP90AA1 and HSP90AB1. Forms a complex with CUL3 and RBX1. Interacts (via BTB 1 domain) with CUL3. Interacts with MSI2. Post-translationally, autoubiquitinated by RHOBTB2-CUL3-RBX1 ubiquitin ligase complex. In terms of tissue distribution, ubiquitous, with highest levels in neural tissues. Expression is also detected in fetal lung, heart, and brain.

Functionally, regulator of cell proliferation and apoptosis. It likely functions as a substrate-adapter that recruits key substrates, e.g. MSI2, to CUL3-based ubiquitin ligase complexes for degradation. Required for MSI2 ubiquitination and degradation. This Homo sapiens (Human) protein is Rho-related BTB domain-containing protein 2 (RHOBTB2).